Here is a 263-residue protein sequence, read N- to C-terminus: Taurine import ATP-binding protein TauB (263 aa).

Residues 4 to 235 enclose the ABC transporter domain; sequence LTAEAISLSF…RYAAGETVRS (232 aa). 40 to 47 provides a ligand contact to ATP; the sequence is GPSGCGKS.

This sequence belongs to the ABC transporter superfamily. Taurine importer (TC 3.A.1.17.1) family. As to quaternary structure, the complex is composed of two ATP-binding proteins (TauB), two transmembrane proteins (TauC) and a solute-binding protein (TauA).

It localises to the cell inner membrane. It carries out the reaction taurine(out) + ATP + H2O = taurine(in) + ADP + phosphate + H(+). In terms of biological role, part of the ABC transporter complex TauABC involved in taurine import. Responsible for energy coupling to the transport system. The protein is Taurine import ATP-binding protein TauB of Pseudomonas aeruginosa (strain UCBPP-PA14).